The primary structure comprises 248 residues: Protein maestro (248 aa).

Positions 1 to 20 (MDQRQRRILGQPLSIPTSQP) are disordered. HEAT repeat units follow at residues 44 to 79 (EPLKNVLFILAERARDPNANKRHTAMRGLGTMAREA) and 128 to 163 (SFFIDITLQTRTLLDDENDSLRYSAFVLFGQLAAFA).

The protein localises to the nucleus. It is found in the nucleolus. In Macaca fascicularis (Crab-eating macaque), this protein is Protein maestro (MRO).